We begin with the raw amino-acid sequence, 310 residues long: Aspartate carbamoyltransferase catalytic subunit (310 aa).

Carbamoyl phosphate contacts are provided by arginine 55 and threonine 56. Lysine 85 contributes to the L-aspartate binding site. Residues arginine 106, histidine 135, and glutamine 138 each contribute to the carbamoyl phosphate site. Arginine 168 and arginine 230 together coordinate L-aspartate. Residues leucine 268 and proline 269 each coordinate carbamoyl phosphate.

It belongs to the aspartate/ornithine carbamoyltransferase superfamily. ATCase family. In terms of assembly, heterododecamer (2C3:3R2) of six catalytic PyrB chains organized as two trimers (C3), and six regulatory PyrI chains organized as three dimers (R2).

The catalysed reaction is carbamoyl phosphate + L-aspartate = N-carbamoyl-L-aspartate + phosphate + H(+). It participates in pyrimidine metabolism; UMP biosynthesis via de novo pathway; (S)-dihydroorotate from bicarbonate: step 2/3. In terms of biological role, catalyzes the condensation of carbamoyl phosphate and aspartate to form carbamoyl aspartate and inorganic phosphate, the committed step in the de novo pyrimidine nucleotide biosynthesis pathway. The protein is Aspartate carbamoyltransferase catalytic subunit of Buchnera aphidicola subsp. Acyrthosiphon pisum (strain 5A).